Reading from the N-terminus, the 372-residue chain is Alanine dehydrogenase 1 (372 aa).

The active site involves His-94. 170 to 200 (TYVIFGGGVAATNAANVALGLNAKVIIIELN) contacts NAD(+).

Belongs to the AlaDH/PNT family.

The catalysed reaction is L-alanine + NAD(+) + H2O = pyruvate + NH4(+) + NADH + H(+). It functions in the pathway amino-acid degradation; L-alanine degradation via dehydrogenase pathway; NH(3) and pyruvate from L-alanine: step 1/1. Its function is as follows. May play a role in cell wall synthesis as L-alanine is an important constituent of the peptidoglycan layer. The sequence is that of Alanine dehydrogenase 1 (ald1) from Staphylococcus aureus (strain MRSA252).